A 324-amino-acid polypeptide reads, in one-letter code: 3'-5' exoribonuclease YhaM (324 aa).

An HD domain is found at 163–279; that stretch reads HVVSMLELAK…LHYIDNLDAK (117 aa).

Belongs to the YhaM family.

In terms of biological role, shows a 3'-5' exoribonuclease activity. This is 3'-5' exoribonuclease YhaM from Geobacillus sp. (strain WCH70).